The sequence spans 507 residues: ATP synthase subunit alpha, chloroplastic (507 aa).

Position 170–177 (Gly170–Thr177) interacts with ATP.

It belongs to the ATPase alpha/beta chains family. F-type ATPases have 2 components, CF(1) - the catalytic core - and CF(0) - the membrane proton channel. CF(1) has five subunits: alpha(3), beta(3), gamma(1), delta(1), epsilon(1). CF(0) has four main subunits: a, b, b' and c.

Its subcellular location is the plastid. It localises to the chloroplast thylakoid membrane. It catalyses the reaction ATP + H2O + 4 H(+)(in) = ADP + phosphate + 5 H(+)(out). In terms of biological role, produces ATP from ADP in the presence of a proton gradient across the membrane. The alpha chain is a regulatory subunit. This chain is ATP synthase subunit alpha, chloroplastic, found in Ceratophyllum demersum (Rigid hornwort).